Here is a 267-residue protein sequence, read N- to C-terminus: 4-hydroxy-tetrahydrodipicolinate reductase (267 aa).

NAD(+)-binding positions include 8–13 (GAAGRM) and Glu34. Residue Arg35 coordinates NADP(+). NAD(+)-binding positions include 98-100 (GST) and 122-125 (APNM). The active-site Proton donor/acceptor is His155. Residue His156 coordinates (S)-2,3,4,5-tetrahydrodipicolinate. Lys159 acts as the Proton donor in catalysis. 165–166 (GT) is a binding site for (S)-2,3,4,5-tetrahydrodipicolinate.

The protein belongs to the DapB family.

It is found in the cytoplasm. The enzyme catalyses (S)-2,3,4,5-tetrahydrodipicolinate + NAD(+) + H2O = (2S,4S)-4-hydroxy-2,3,4,5-tetrahydrodipicolinate + NADH + H(+). It carries out the reaction (S)-2,3,4,5-tetrahydrodipicolinate + NADP(+) + H2O = (2S,4S)-4-hydroxy-2,3,4,5-tetrahydrodipicolinate + NADPH + H(+). Its pathway is amino-acid biosynthesis; L-lysine biosynthesis via DAP pathway; (S)-tetrahydrodipicolinate from L-aspartate: step 4/4. Functionally, catalyzes the conversion of 4-hydroxy-tetrahydrodipicolinate (HTPA) to tetrahydrodipicolinate. The sequence is that of 4-hydroxy-tetrahydrodipicolinate reductase from Citrifermentans bemidjiense (strain ATCC BAA-1014 / DSM 16622 / JCM 12645 / Bem) (Geobacter bemidjiensis).